The chain runs to 782 residues: Endonuclease MutS2 (782 aa).

336 to 343 is a binding site for ATP; it reads GPNTGGKT. Residues 707–782 enclose the Smr domain; sequence LDLRGYRYED…GFGVTVATLK (76 aa).

The protein belongs to the DNA mismatch repair MutS family. MutS2 subfamily. Homodimer. Binds to stalled ribosomes, contacting rRNA.

In terms of biological role, endonuclease that is involved in the suppression of homologous recombination and thus may have a key role in the control of bacterial genetic diversity. Functionally, acts as a ribosome collision sensor, splitting the ribosome into its 2 subunits. Detects stalled/collided 70S ribosomes which it binds and splits by an ATP-hydrolysis driven conformational change. Acts upstream of the ribosome quality control system (RQC), a ribosome-associated complex that mediates the extraction of incompletely synthesized nascent chains from stalled ribosomes and their subsequent degradation. Probably generates substrates for RQC. This is Endonuclease MutS2 from Staphylococcus aureus (strain Mu50 / ATCC 700699).